We begin with the raw amino-acid sequence, 371 residues long: Aminomethyltransferase (371 aa).

The protein belongs to the GcvT family. The glycine cleavage system is composed of four proteins: P, T, L and H.

The catalysed reaction is N(6)-[(R)-S(8)-aminomethyldihydrolipoyl]-L-lysyl-[protein] + (6S)-5,6,7,8-tetrahydrofolate = N(6)-[(R)-dihydrolipoyl]-L-lysyl-[protein] + (6R)-5,10-methylene-5,6,7,8-tetrahydrofolate + NH4(+). In terms of biological role, the glycine cleavage system catalyzes the degradation of glycine. In Oceanobacillus iheyensis (strain DSM 14371 / CIP 107618 / JCM 11309 / KCTC 3954 / HTE831), this protein is Aminomethyltransferase.